Reading from the N-terminus, the 146-residue chain is Snaclec stejaggregin-B subunit beta-1 (146 aa).

Positions 1-23 are cleaved as a signal peptide; sequence MGRFIFVSFGLLVVFLSLSGTGA. Cystine bridges form between cysteine 25-cysteine 36, cysteine 53-cysteine 142, and cysteine 119-cysteine 134. Positions 32–143 constitute a C-type lectin domain; sequence YDLYCYRVFQ…CSQTYPFVCK (112 aa).

The protein belongs to the snaclec family. In terms of assembly, heteromultimer; disulfide-linked. As to expression, expressed by the venom gland.

The protein localises to the secreted. Interferes with one step of hemostasis (modulation of platelet aggregation, or coagulation cascade, for example). This is Snaclec stejaggregin-B subunit beta-1 from Trimeresurus stejnegeri (Chinese green tree viper).